We begin with the raw amino-acid sequence, 45 residues long: Large ribosomal subunit protein bL34c (45 aa).

Polar residues predominate over residues Met1–Asn10. The tract at residues Met1–Leu45 is disordered. A compositionally biased stretch (basic residues) spans Leu32–Leu45.

It belongs to the bacterial ribosomal protein bL34 family.

The protein resides in the plastid. The protein localises to the chloroplast. The protein is Large ribosomal subunit protein bL34c of Gracilaria tenuistipitata var. liui (Red alga).